The sequence spans 890 residues: Translation initiation factor IF-2 (890 aa).

A disordered region spans residues leucine 45–glutamine 304. A compositionally biased stretch (polar residues) spans serine 67–valine 81. Positions valine 92 to aspartate 217 are enriched in basic and acidic residues. Residues glycine 252–asparagine 266 show a composition bias toward basic residues. Residues lysine 267 to alanine 280 show a composition bias toward basic and acidic residues. Residues proline 389 to lysine 558 form the tr-type G domain. Residues glycine 398–threonine 405 form a G1 region. Residue glycine 398 to threonine 405 participates in GTP binding. A G2 region spans residues glycine 423 to histidine 427. The interval aspartate 444–glycine 447 is G3. Residues aspartate 444–histidine 448 and asparagine 498–aspartate 501 contribute to the GTP site. The tract at residues asparagine 498–aspartate 501 is G4. Residues serine 534–lysine 536 are G5. Lysine 808 is subject to N6-acetyllysine.

This sequence belongs to the TRAFAC class translation factor GTPase superfamily. Classic translation factor GTPase family. IF-2 subfamily.

Its subcellular location is the cytoplasm. Functionally, one of the essential components for the initiation of protein synthesis. Protects formylmethionyl-tRNA from spontaneous hydrolysis and promotes its binding to the 30S ribosomal subunits. Also involved in the hydrolysis of GTP during the formation of the 70S ribosomal complex. This is Translation initiation factor IF-2 from Escherichia coli O127:H6 (strain E2348/69 / EPEC).